The sequence spans 374 residues: Phosphatidylglycerol--prolipoprotein diacylglyceryl transferase (374 aa).

The next 4 membrane-spanning stretches (helical) occupy residues 33–53 (ICFI…IALF), 155–175 (LCWF…VFFY), 195–215 (LASH…TSYI), and 222–242 (LSFL…AVFI). R243 lines the a 1,2-diacyl-sn-glycero-3-phospho-(1'-sn-glycerol) pocket. A run of 3 helical transmembrane segments spans residues 279-299 (PVQL…FTLW), 306-326 (LAAG…RFLL), and 341-361 (ILQM…CLVW).

The protein belongs to the Lgt family.

The protein localises to the cell inner membrane. The enzyme catalyses L-cysteinyl-[prolipoprotein] + a 1,2-diacyl-sn-glycero-3-phospho-(1'-sn-glycerol) = an S-1,2-diacyl-sn-glyceryl-L-cysteinyl-[prolipoprotein] + sn-glycerol 1-phosphate + H(+). Its pathway is protein modification; lipoprotein biosynthesis (diacylglyceryl transfer). Functionally, catalyzes the transfer of the diacylglyceryl group from phosphatidylglycerol to the sulfhydryl group of the N-terminal cysteine of a prolipoprotein, the first step in the formation of mature lipoproteins. The protein is Phosphatidylglycerol--prolipoprotein diacylglyceryl transferase of Protochlamydia amoebophila (strain UWE25).